The following is a 430-amino-acid chain: Pyrokinin-1 receptor (430 aa).

The Extracellular segment spans residues 1-16 (MSAGNMSHDLGPPRDP). An N-linked (GlcNAc...) asparagine glycan is attached at Asn-5. A helical membrane pass occupies residues 17–37 (LAIVIPVTVVYSLIFITGVVG). Residues 38–53 (NISTCIVIKKNRSMHT) are Cytoplasmic-facing. The chain crosses the membrane as a helical span at residues 54-74 (ATNYYLFSLAISDFLLLLSGV). The Extracellular portion of the chain corresponds to 75-96 (PQEVSYIWSKYPYVFGEYICIG). An intrachain disulfide couples Cys-94 to Cys-171. The chain crosses the membrane as a helical span at residues 97-117 (RGLLAETSANATVLTITAFTV). Residues 118–140 (ERYIAICHPFLGQAMSKLSRAIR) are Cytoplasmic-facing. Residues 141-161 (IIVLVWIMAIVTAIPQAAQFG) form a helical membrane-spanning segment. At 162–185 (IEHYSGVEQCGIVRVIVKHSFQLS) the chain is on the extracellular side. Residues 186-206 (TFIFFLAPMSIILVLYLLIGV) form a helical membrane-spanning segment. At 207-281 (HLYRSTLVEG…GRLNHYGTRR (75 aa)) the chain is on the cytoplasmic side. A helical membrane pass occupies residues 282–302 (VLRMLVAVVVCFFLCWAPFHA). The Extracellular portion of the chain corresponds to 303-321 (QRLIAIYAPARGAKLRDQH). Residues 322 to 342 (EFVYTVMTYVSGVLYYLSTCI) form a helical membrane-spanning segment. Topologically, residues 343–430 (NPLLYNIMSH…QYAMIGVQVN (88 aa)) are cytoplasmic. The segment covering 388 to 397 (TNSSQTQRFS) has biased composition (polar residues). The tract at residues 388–413 (TNSSQTQRFSIESAEQPKPSIMQNPT) is disordered.

It belongs to the G-protein coupled receptor 1 family.

Its subcellular location is the cell membrane. Its function is as follows. Receptor for the neuropeptide CAP-3/pyrokinin-1 (TGPSASSGLWFGPRL-amide). Also activated weakly by other neuropeptides terminating in the sequence PRL-amide including pyrokinin-2, Hug-gamma, and ecdysis-triggering-hormone-1. The activity of this receptor is mediated by G proteins which activate a phosphatidyl-inositol-calcium second messenger system. In Drosophila melanogaster (Fruit fly), this protein is Pyrokinin-1 receptor.